We begin with the raw amino-acid sequence, 65 residues long: MPVVRVSWFEGKDAKAKKAVAAEITDSIVKHAGTDPKYIYVIFEDIKPSDWAGAGRLYGEEPGTP.

The Proton acceptor; via imino nitrogen role is filled by Pro-2.

This sequence belongs to the 4-oxalocrotonate tautomerase family.

This is Probable tautomerase RSp1151 from Ralstonia nicotianae (strain ATCC BAA-1114 / GMI1000) (Ralstonia solanacearum).